Consider the following 328-residue polypeptide: D-cysteine desulfhydrase (328 aa).

At Lys-51 the chain carries N6-(pyridoxal phosphate)lysine.

Belongs to the ACC deaminase/D-cysteine desulfhydrase family. In terms of assembly, homodimer. Pyridoxal 5'-phosphate serves as cofactor.

It catalyses the reaction D-cysteine + H2O = hydrogen sulfide + pyruvate + NH4(+) + H(+). Its function is as follows. Catalyzes the alpha,beta-elimination reaction of D-cysteine and of several D-cysteine derivatives. It could be a defense mechanism against D-cysteine. The polypeptide is D-cysteine desulfhydrase (Shigella sonnei (strain Ss046)).